The following is a 580-amino-acid chain: mRNA cap guanine-N(7) methyltransferase (580 aa).

Composition is skewed to polar residues over residues 1-17 (MSGS…TSLI) and 25-53 (EATS…NSDL). The tract at residues 1–222 (MSGSKQGSEK…PVEAQPYSRL (222 aa)) is disordered. Residues 54 to 67 (KVTENKPKNTEMKP) show a composition bias toward basic and acidic residues. Residues 69-90 (DPNTNASTTENTPITTSNAQVS) show a composition bias toward polar residues. Basic and acidic residues predominate over residues 102–154 (REPEEAQNRYDRYVPRVDNRRRGEPRVAEVRQDPRYAKYLRQDQEERRIRRPD). A compositionally biased stretch (acidic residues) spans 191–214 (ESEENGDEQQGDDEEETPGNEEPV). Positions 271–579 (SPIYKLRNFN…FYLGFAFEKL (309 aa)) constitute an mRNA cap 0 methyltransferase domain. An mRNA-binding site is contributed by 280-281 (NN). Positions 284, 308, 330, 376, 406, and 411 each coordinate S-adenosyl-L-methionine.

This sequence belongs to the class I-like SAM-binding methyltransferase superfamily. mRNA cap 0 methyltransferase family.

Its subcellular location is the nucleus. The catalysed reaction is a 5'-end (5'-triphosphoguanosine)-ribonucleoside in mRNA + S-adenosyl-L-methionine = a 5'-end (N(7)-methyl 5'-triphosphoguanosine)-ribonucleoside in mRNA + S-adenosyl-L-homocysteine. Functionally, responsible for methylating the 5'-cap structure of mRNAs. The polypeptide is mRNA cap guanine-N(7) methyltransferase (ABD1) (Meyerozyma guilliermondii (strain ATCC 6260 / CBS 566 / DSM 6381 / JCM 1539 / NBRC 10279 / NRRL Y-324) (Yeast)).